A 67-amino-acid chain; its full sequence is uncharacterized protein (67 aa).

The next 2 membrane-spanning stretches (helical) occupy residues 13–32 (IACL…GFIV) and 42–64 (RLTN…TLGL).

It is found in the membrane. This is an uncharacterized protein from Saccharomyces cerevisiae (strain ATCC 204508 / S288c) (Baker's yeast).